Consider the following 513-residue polypeptide: ATP synthase subunit alpha (513 aa).

Gly169 to Thr176 provides a ligand contact to ATP.

It belongs to the ATPase alpha/beta chains family. As to quaternary structure, F-type ATPases have 2 components, CF(1) - the catalytic core - and CF(0) - the membrane proton channel. CF(1) has five subunits: alpha(3), beta(3), gamma(1), delta(1), epsilon(1). CF(0) has three main subunits: a(1), b(2) and c(9-12). The alpha and beta chains form an alternating ring which encloses part of the gamma chain. CF(1) is attached to CF(0) by a central stalk formed by the gamma and epsilon chains, while a peripheral stalk is formed by the delta and b chains.

The protein localises to the cell inner membrane. It catalyses the reaction ATP + H2O + 4 H(+)(in) = ADP + phosphate + 5 H(+)(out). Functionally, produces ATP from ADP in the presence of a proton gradient across the membrane. The alpha chain is a regulatory subunit. The polypeptide is ATP synthase subunit alpha (Shewanella piezotolerans (strain WP3 / JCM 13877)).